The primary structure comprises 694 residues: N,N-dimethylglycine/sarcosine dehydrogenase (694 aa).

The protein in the N-terminal section; belongs to the NADH:flavin oxidoreductase/NADH oxidase family. As to quaternary structure, monomer. The purified enzyme exists in the form of a monomer, dimer or polymer under non-denaturing conditions, but only the monomeric protein exhibits enzyme activity. It depends on FAD as a cofactor. NAD(+) serves as cofactor. Requires NADP(+) as cofactor.

It localises to the cytoplasm. It carries out the reaction oxidized 2[4Fe-4S]-[ferredoxin] + N,N-dimethylglycine + H2O = reduced 2[4Fe-4S]-[ferredoxin] + sarcosine + formaldehyde + 2 H(+). It catalyses the reaction oxidized 2[4Fe-4S]-[ferredoxin] + sarcosine + H2O = reduced 2[4Fe-4S]-[ferredoxin] + formaldehyde + glycine + 2 H(+). Its activity is regulated as follows. Ca(2+) increases the activity by 12%, while the other metal ions tested have no or slightly inhibitory effects. The chelating agent EDTA inhibits the activity by 33%. Functionally, involved in degradation of glycine betaine. Catalyzes the demethylation of both N,N-dimethylglycine (DMG) and sarcosine, releasing formaldehyde and forming glycine as the final product. Does not show activity toward trimethylamine (TMA), histamine, glycine betaine (GB) or choline. The C-N bond in DMG is probably oxidized by removal of a hydride equivalent to form a labile imine intermediate, which is then spontaneously hydrolyzed in the presence of water, producing sarcosine and formaldehyde. The two protons subtracted from DMG are transferred to the non-covalently bound FAD, resulting in the reduced form of FAD, which is subsequently reoxidized by coupling with reduction of the enzyme-bound NAD(P)(+). Regeneration of NAD(P)(+) is achieved by electron transfer to the [4Fe-4S] cluster in the probable membrane-anchored ferredoxin csal_0991. The polypeptide is N,N-dimethylglycine/sarcosine dehydrogenase (Chromohalobacter salexigens (strain ATCC BAA-138 / DSM 3043 / CIP 106854 / NCIMB 13768 / 1H11)).